Here is a 477-residue protein sequence, read N- to C-terminus: Adenylyl cyclase-associated protein 2 (477 aa).

Alanine 2 carries the post-translational modification N-acetylalanine. Disordered stretches follow at residues valine 224–serine 261 and threonine 274–proline 323. Residues glycine 230–leucine 246 are compositionally biased toward pro residues. Serine 301 and serine 309 each carry phosphoserine. The span at serine 301–lysine 320 shows a compositional bias: low complexity. Positions proline 317–isoleucine 455 constitute a C-CAP/cofactor C-like domain.

The protein belongs to the CAP family.

Its subcellular location is the cell membrane. Its function is as follows. Involved in the regulation of actin polymerization. The protein is Adenylyl cyclase-associated protein 2 (CAP2) of Pongo abelii (Sumatran orangutan).